Consider the following 280-residue polypeptide: Probable endonuclease 4 (280 aa).

The Zn(2+) site is built by histidine 69, histidine 109, glutamate 145, aspartate 179, histidine 182, histidine 216, aspartate 229, histidine 231, and glutamate 261.

Belongs to the AP endonuclease 2 family. Zn(2+) serves as cofactor.

The catalysed reaction is Endonucleolytic cleavage to 5'-phosphooligonucleotide end-products.. In terms of biological role, endonuclease IV plays a role in DNA repair. It cleaves phosphodiester bonds at apurinic or apyrimidinic (AP) sites, generating a 3'-hydroxyl group and a 5'-terminal sugar phosphate. The polypeptide is Probable endonuclease 4 (Actinobacillus pleuropneumoniae serotype 7 (strain AP76)).